Reading from the N-terminus, the 222-residue chain is Transmembrane protein 54 (222 aa).

4 helical membrane-spanning segments follow: residues 22–42 (LVLV…HGTV), 62–82 (ILSV…IVLS), 100–120 (ACAL…AMTF), and 155–175 (SSLC…VFAV).

Belongs to the TMEM54 family. Ubiquitously expressed in cancer cell lines.

The protein localises to the membrane. The protein is Transmembrane protein 54 (TMEM54) of Homo sapiens (Human).